Reading from the N-terminus, the 328-residue chain is 6-phosphogluconolactonase (328 aa).

This sequence belongs to the cycloisomerase 2 family.

The enzyme catalyses 6-phospho-D-glucono-1,5-lactone + H2O = 6-phospho-D-gluconate + H(+). The protein operates within carbohydrate degradation; pentose phosphate pathway; D-ribulose 5-phosphate from D-glucose 6-phosphate (oxidative stage): step 2/3. In terms of biological role, catalyzes the hydrolysis of 6-phosphogluconolactone to 6-phosphogluconate. The protein is 6-phosphogluconolactonase of Xenorhabdus nematophila (strain ATCC 19061 / DSM 3370 / CCUG 14189 / LMG 1036 / NCIMB 9965 / AN6).